A 440-amino-acid chain; its full sequence is UDP-N-acetylmuramoylalanine--D-glutamate ligase (440 aa).

113 to 119 (GTNGKST) contributes to the ATP binding site.

It belongs to the MurCDEF family.

It localises to the cytoplasm. The enzyme catalyses UDP-N-acetyl-alpha-D-muramoyl-L-alanine + D-glutamate + ATP = UDP-N-acetyl-alpha-D-muramoyl-L-alanyl-D-glutamate + ADP + phosphate + H(+). It functions in the pathway cell wall biogenesis; peptidoglycan biosynthesis. Cell wall formation. Catalyzes the addition of glutamate to the nucleotide precursor UDP-N-acetylmuramoyl-L-alanine (UMA). In Buchnera aphidicola subsp. Acyrthosiphon pisum (strain Tuc7), this protein is UDP-N-acetylmuramoylalanine--D-glutamate ligase.